The sequence spans 736 residues: Replication restart protein PriA (736 aa).

One can recognise a Helicase ATP-binding domain in the interval 230-396; sequence DFKGNISKEN…KEGRIRTFNF (167 aa). ATP is bound at residue 243-250; it reads GPTGSGKT. Positions 339–342 match the DEAH box motif; the sequence is DEEH. Zn(2+) contacts are provided by Cys-452, Cys-455, Cys-461, Cys-464, Cys-479, Cys-482, Cys-492, and Cys-495. A Helicase C-terminal domain is found at 487–643; the sequence is GLVESCPRCG…EELERRKALG (157 aa).

The protein belongs to the helicase family. PriA subfamily. Component of the replication restart primosome. Zn(2+) serves as cofactor.

The enzyme catalyses Couples ATP hydrolysis with the unwinding of duplex DNA by translocating in the 3'-5' direction.. It catalyses the reaction ATP + H2O = ADP + phosphate + H(+). Functionally, initiates the restart of stalled replication forks, which reloads the replicative helicase on sites other than the origin of replication. Recognizes and binds to abandoned replication forks and remodels them to uncover a helicase loading site. Promotes assembly of the primosome at these replication forks. This chain is Replication restart protein PriA, found in Thermotoga maritima (strain ATCC 43589 / DSM 3109 / JCM 10099 / NBRC 100826 / MSB8).